The sequence spans 184 residues: Oocyte-secreted protein 4A (184 aa).

Positions 1–19 are cleaved as a signal peptide; the sequence is MKISCVLGKLLMLFELIHG. Residue Asn128 is glycosylated (N-linked (GlcNAc...) asparagine).

It belongs to the PLAC1 family.

It is found in the secreted. In Homo sapiens (Human), this protein is Oocyte-secreted protein 4A.